Reading from the N-terminus, the 320-residue chain is GTP 3',8-cyclase (320 aa).

In terms of domain architecture, Radical SAM core spans 5–225 (QFDRKINYLR…IQLIKKDEKA (221 aa)). Arginine 14 is a GTP binding site. [4Fe-4S] cluster is bound by residues cysteine 21 and cysteine 25. Residue tyrosine 27 participates in S-adenosyl-L-methionine binding. Cysteine 28 provides a ligand contact to [4Fe-4S] cluster. Arginine 64 serves as a coordination point for GTP. Glycine 68 contributes to the S-adenosyl-L-methionine binding site. Position 95 (threonine 95) interacts with GTP. Serine 119 contacts S-adenosyl-L-methionine. A GTP-binding site is contributed by lysine 155. Residue methionine 189 participates in S-adenosyl-L-methionine binding. The [4Fe-4S] cluster site is built by cysteine 248 and cysteine 251. Residue 253 to 255 (RIR) coordinates GTP. Position 265 (cysteine 265) interacts with [4Fe-4S] cluster.

This sequence belongs to the radical SAM superfamily. MoaA family. Monomer and homodimer. [4Fe-4S] cluster is required as a cofactor.

The catalysed reaction is GTP + AH2 + S-adenosyl-L-methionine = (8S)-3',8-cyclo-7,8-dihydroguanosine 5'-triphosphate + 5'-deoxyadenosine + L-methionine + A + H(+). It functions in the pathway cofactor biosynthesis; molybdopterin biosynthesis. Catalyzes the cyclization of GTP to (8S)-3',8-cyclo-7,8-dihydroguanosine 5'-triphosphate. This is GTP 3',8-cyclase from Campylobacter jejuni subsp. doylei (strain ATCC BAA-1458 / RM4099 / 269.97).